A 268-amino-acid polypeptide reads, in one-letter code: 4-hydroxy-tetrahydrodipicolinate reductase (268 aa).

NAD(+) is bound by residues Gly10–Met15 and Asp36. Arg37 is a binding site for NADP(+). Residues Gly99–Thr101 and Ser123–Met126 each bind NAD(+). His156 serves as the catalytic Proton donor/acceptor. Residue His157 participates in (S)-2,3,4,5-tetrahydrodipicolinate binding. The Proton donor role is filled by Lys160. Gly166–Thr167 serves as a coordination point for (S)-2,3,4,5-tetrahydrodipicolinate.

Belongs to the DapB family.

The protein resides in the cytoplasm. It catalyses the reaction (S)-2,3,4,5-tetrahydrodipicolinate + NAD(+) + H2O = (2S,4S)-4-hydroxy-2,3,4,5-tetrahydrodipicolinate + NADH + H(+). The enzyme catalyses (S)-2,3,4,5-tetrahydrodipicolinate + NADP(+) + H2O = (2S,4S)-4-hydroxy-2,3,4,5-tetrahydrodipicolinate + NADPH + H(+). Its pathway is amino-acid biosynthesis; L-lysine biosynthesis via DAP pathway; (S)-tetrahydrodipicolinate from L-aspartate: step 4/4. Functionally, catalyzes the conversion of 4-hydroxy-tetrahydrodipicolinate (HTPA) to tetrahydrodipicolinate. The chain is 4-hydroxy-tetrahydrodipicolinate reductase from Burkholderia mallei (strain NCTC 10247).